Here is a 110-residue protein sequence, read N- to C-terminus: N(4)-acetylcytidine amidohydrolase (110 aa).

An ASCH domain is found at 6–93 (TFFERFEQDI…IQEIYPGLEQ (88 aa)). The active-site Proton acceptor is K20. The active-site Nucleophile is the T23. Residue E73 is the Proton donor of the active site.

The protein belongs to the N(4)-acetylcytidine amidohydrolase family.

The enzyme catalyses N(4)-acetylcytidine + H2O = cytidine + acetate + H(+). The catalysed reaction is N(4)-acetyl-2'-deoxycytidine + H2O = 2'-deoxycytidine + acetate + H(+). It catalyses the reaction N(4)-acetylcytosine + H2O = cytosine + acetate + H(+). Functionally, catalyzes the hydrolysis of N(4)-acetylcytidine (ac4C). The chain is N(4)-acetylcytidine amidohydrolase from Shewanella sp. (strain ANA-3).